The primary structure comprises 188 residues: Inosine triphosphate pyrophosphatase (188 aa).

Position 11 to 16 (11 to 16 (TGNKHK)) interacts with ITP. Position 39 (E39) interacts with Mg(2+). ITP-binding positions include K51, 67–68 (DT), K84, 143–146 (FGWN), and 171–172 (HR).

It belongs to the HAM1 NTPase family. As to quaternary structure, homodimer. The cofactor is Mg(2+). It depends on Mn(2+) as a cofactor.

It localises to the cytoplasm. It is found in the nucleus. It carries out the reaction ITP + H2O = IMP + diphosphate + H(+). It catalyses the reaction dITP + H2O = dIMP + diphosphate + H(+). The enzyme catalyses XTP + H2O = XMP + diphosphate + H(+). Its function is as follows. Pyrophosphatase that hydrolyzes non-canonical purine nucleotides such as inosine triphosphate (ITP), deoxyinosine triphosphate (dITP) or xanthosine 5'-triphosphate (XTP) to their respective monophosphate derivatives. The enzyme does not distinguish between the deoxy- and ribose forms. Probably excludes non-canonical purines from RNA and DNA precursor pools, thus preventing their incorporation into RNA and DNA and avoiding chromosomal lesions. The polypeptide is Inosine triphosphate pyrophosphatase (Schizosaccharomyces pombe (strain 972 / ATCC 24843) (Fission yeast)).